The primary structure comprises 94 residues: Putative regulatory protein Sfum_3631 (94 aa).

It belongs to the RemA family.

The sequence is that of Putative regulatory protein Sfum_3631 from Syntrophobacter fumaroxidans (strain DSM 10017 / MPOB).